The sequence spans 1744 residues: Retrotransposon-like protein 1 (1744 aa).

3 disordered regions span residues 1–416 (MIEP…SPEE), 823–859 (READ…DQSG), and 1287–1439 (SSET…EVPS). Residues 19–30 (SSKQMESSEGSS) show a composition bias toward low complexity. The segment covering 31–40 (NTVEETPGSS) has biased composition (polar residues). Residues 41–80 (GAQAGAQAGAQAEAQAETQVEAQAEAQAEAQVEAQVEAQA) show a composition bias toward low complexity. The span at 269–318 (DGSNQESSDGSNHELSNGSNHESSFGSNPESSDVSNLESSGGSNQESSDG) shows a compositional bias: polar residues. Residues 332–361 (SDNSNQELSDNSNQESSDSSNQSSDISNQE) show a composition bias toward low complexity. 3 stretches are compositionally biased toward acidic residues: residues 385–407 (SDQD…GEEE), 837–846 (GSDDLSESEP), and 1291–1437 (EDKE…DEEV). 2 helical membrane passes run 1473–1493 (FFRG…LVML) and 1520–1540 (LILD…AQLL).

As to expression, expressed in placenta and in various tissues in late-fetal stage.

It localises to the membrane. Its function is as follows. Plays an essential role in capillaries endothelial cells for the maintenance of feto-maternal interface and for development of the placenta. This is Retrotransposon-like protein 1 (Rtl1) from Mus musculus (Mouse).